Here is a 188-residue protein sequence, read N- to C-terminus: MGRTRENKATVIADLKELLSEAQLGMVIDYQGLSVAEITELRNRLRPSGAICKVTKNTLMEQAITGDEAWEPMTNFLKGSSAFVLVKDDVGSAVRAYQSFKKDTKKTEFRGGVMQGQALNEDQVKAIADLPSKEELIGQVAGAINSIATKLAVGVNEVPTSIGRGINDIPNSLGRVMAAMAAKEEGNG.

This sequence belongs to the universal ribosomal protein uL10 family. Part of the ribosomal stalk of the 50S ribosomal subunit. The N-terminus interacts with L11 and the large rRNA to form the base of the stalk. The C-terminus forms an elongated spine to which L12 dimers bind in a sequential fashion forming a multimeric L10(L12)X complex.

In terms of biological role, forms part of the ribosomal stalk, playing a central role in the interaction of the ribosome with GTP-bound translation factors. This is Large ribosomal subunit protein uL10 from Crocosphaera subtropica (strain ATCC 51142 / BH68) (Cyanothece sp. (strain ATCC 51142)).